A 401-amino-acid chain; its full sequence is Phosphoglycerate kinase (401 aa).

Substrate-binding positions include 26-28, Arg41, 64-67, Arg125, and Arg158; these read DFN and HLGK. ATP is bound by residues Lys209, Gly300, Glu331, and 357–360; that span reads GGDS.

The protein belongs to the phosphoglycerate kinase family. As to quaternary structure, monomer.

The protein resides in the cytoplasm. It carries out the reaction (2R)-3-phosphoglycerate + ATP = (2R)-3-phospho-glyceroyl phosphate + ADP. It participates in carbohydrate degradation; glycolysis; pyruvate from D-glyceraldehyde 3-phosphate: step 2/5. This Clostridium tetani (strain Massachusetts / E88) protein is Phosphoglycerate kinase.